Reading from the N-terminus, the 316-residue chain is L-lactate dehydrogenase (316 aa).

NAD(+) contacts are provided by residues 13 to 15 (GMI), 34 to 36 (FDI), tyrosine 67, and 79 to 83 (TAGFT). Substrate is bound at residue arginine 95. NAD(+)-binding positions include 125-127 (VTN), leucine 150, and leucine 154. Substrate contacts are provided by arginine 158 and histidine 182. Histidine 182 serves as a coordination point for NAD(+). Histidine 182 acts as the Proton acceptor in catalysis.

Belongs to the LDH/MDH superfamily. LDH family. In terms of assembly, homotetramer.

The catalysed reaction is (S)-lactate + NAD(+) = pyruvate + NADH + H(+). Its pathway is fermentation; pyruvate fermentation to lactate; (S)-lactate from pyruvate: step 1/1. The polypeptide is L-lactate dehydrogenase (Plasmodium berghei).